We begin with the raw amino-acid sequence, 429 residues long: Glucose-1-phosphate adenylyltransferase (429 aa).

Alpha-D-glucose 1-phosphate-binding positions include Gly-162, Glu-177–Lys-178, and Ser-209.

Belongs to the bacterial/plant glucose-1-phosphate adenylyltransferase family. As to quaternary structure, homotetramer.

It carries out the reaction alpha-D-glucose 1-phosphate + ATP + H(+) = ADP-alpha-D-glucose + diphosphate. The protein operates within glycan biosynthesis; glycogen biosynthesis. Activated by 3-phosphoglycerate and inhibited by phosphate. Its function is as follows. Involved in the biosynthesis of ADP-glucose, a building block required for the elongation reactions to produce glycogen. Catalyzes the reaction between ATP and alpha-D-glucose 1-phosphate (G1P) to produce pyrophosphate and ADP-Glc. This Nostoc sp. (strain PCC 7120 / SAG 25.82 / UTEX 2576) protein is Glucose-1-phosphate adenylyltransferase.